Here is a 53-residue protein sequence, read N- to C-terminus: Large ribosomal subunit protein bL33 (53 aa).

This sequence belongs to the bacterial ribosomal protein bL33 family.

This Ureaplasma parvum serovar 3 (strain ATCC 27815 / 27 / NCTC 11736) protein is Large ribosomal subunit protein bL33.